We begin with the raw amino-acid sequence, 352 residues long: Biotin synthase (352 aa).

The region spanning Asn44–Gln262 is the Radical SAM core domain. The [4Fe-4S] cluster site is built by Cys59, Cys63, and Cys66. [2Fe-2S] cluster is bound by residues Cys103, Cys134, Cys194, and Arg266.

Belongs to the radical SAM superfamily. Biotin synthase family. As to quaternary structure, homodimer. The cofactor is [4Fe-4S] cluster. [2Fe-2S] cluster is required as a cofactor.

The enzyme catalyses (4R,5S)-dethiobiotin + (sulfur carrier)-SH + 2 reduced [2Fe-2S]-[ferredoxin] + 2 S-adenosyl-L-methionine = (sulfur carrier)-H + biotin + 2 5'-deoxyadenosine + 2 L-methionine + 2 oxidized [2Fe-2S]-[ferredoxin]. It functions in the pathway cofactor biosynthesis; biotin biosynthesis; biotin from 7,8-diaminononanoate: step 2/2. Functionally, catalyzes the conversion of dethiobiotin (DTB) to biotin by the insertion of a sulfur atom into dethiobiotin via a radical-based mechanism. In Pseudomonas savastanoi pv. phaseolicola (strain 1448A / Race 6) (Pseudomonas syringae pv. phaseolicola (strain 1448A / Race 6)), this protein is Biotin synthase.